We begin with the raw amino-acid sequence, 72 residues long: SRY-related protein AES6 (72 aa).

Positions 1–69 form a DNA-binding region, HMG box; it reads VKRPMNAFMV…KHMADYPDYK (69 aa).

The protein localises to the nucleus. The protein is SRY-related protein AES6 of Alligator mississippiensis (American alligator).